The chain runs to 1405 residues: DNA-directed RNA polymerase subunit beta' (1405 aa).

Zn(2+) is bound by residues C65, C67, C80, and C83. 3 residues coordinate Mg(2+): D468, D470, and D472. Zn(2+) is bound by residues C811, C885, C892, and C895.

This sequence belongs to the RNA polymerase beta' chain family. In terms of assembly, the RNAP catalytic core consists of 2 alpha, 1 beta, 1 beta' and 1 omega subunit. When a sigma factor is associated with the core the holoenzyme is formed, which can initiate transcription. Requires Mg(2+) as cofactor. Zn(2+) is required as a cofactor.

The enzyme catalyses RNA(n) + a ribonucleoside 5'-triphosphate = RNA(n+1) + diphosphate. Functionally, DNA-dependent RNA polymerase catalyzes the transcription of DNA into RNA using the four ribonucleoside triphosphates as substrates. The protein is DNA-directed RNA polymerase subunit beta' of Azobacteroides pseudotrichonymphae genomovar. CFP2.